The sequence spans 314 residues: Methionyl-tRNA formyltransferase (314 aa).

113 to 116 (SLLP) is a binding site for (6S)-5,6,7,8-tetrahydrofolate.

It belongs to the Fmt family.

It carries out the reaction L-methionyl-tRNA(fMet) + (6R)-10-formyltetrahydrofolate = N-formyl-L-methionyl-tRNA(fMet) + (6S)-5,6,7,8-tetrahydrofolate + H(+). In terms of biological role, attaches a formyl group to the free amino group of methionyl-tRNA(fMet). The formyl group appears to play a dual role in the initiator identity of N-formylmethionyl-tRNA by promoting its recognition by IF2 and preventing the misappropriation of this tRNA by the elongation apparatus. The polypeptide is Methionyl-tRNA formyltransferase (Pseudomonas aeruginosa (strain UCBPP-PA14)).